Consider the following 221-residue polypeptide: Retinitis pigmentosa 9 protein (221 aa).

3 stretches are compositionally biased toward basic and acidic residues: residues 1–10 (MSSRPGREDV), 17–29 (RPREPPEQELQRR), and 60–69 (IKEDETKPED). Residues 1-76 (MSSRPGREDV…PEDCIPDVPG (76 aa)) form a disordered region. Residues 1–155 (MSSRPGREDV…RDNKRHEKDV (155 aa)) are PIM1-binding. The CCHC-type zinc finger occupies 104–122 (QCWRCKRYGHRTGDKECPF). A Glycyl lysine isopeptide (Lys-Gly) (interchain with G-Cter in SUMO2) cross-link involves residue K129. The segment covering 147-156 (DNKRHEKDVR) has biased composition (basic and acidic residues). Residues 147–221 (DNKRHEKDVR…SKSNEGSDSE (75 aa)) are disordered. Residues 184–212 (KHKKKKKKEKHKKRKKEKKKKKKRKHKSS) are compositionally biased toward basic residues. 2 positions are modified to phosphoserine; by PIM1: S212 and S214.

Binds to PIM1. Binds to ZNHIT4. As to expression, appears to be expressed in a wide range of tissues.

Its subcellular location is the nucleus. Its function is as follows. Is thought to be a target protein for the PIM1 kinase. May play some roles in B-cell proliferation in association with PIM1. This chain is Retinitis pigmentosa 9 protein (RP9), found in Homo sapiens (Human).